The following is a 191-amino-acid chain: Orotate phosphoribosyltransferase (191 aa).

114 to 122 (EDVVTTGKS) serves as a coordination point for 5-phospho-alpha-D-ribose 1-diphosphate. The orotate site is built by Thr-118 and Arg-146.

It belongs to the purine/pyrimidine phosphoribosyltransferase family. PyrE subfamily. As to quaternary structure, homodimer. It depends on Mg(2+) as a cofactor.

It carries out the reaction orotidine 5'-phosphate + diphosphate = orotate + 5-phospho-alpha-D-ribose 1-diphosphate. The protein operates within pyrimidine metabolism; UMP biosynthesis via de novo pathway; UMP from orotate: step 1/2. Catalyzes the transfer of a ribosyl phosphate group from 5-phosphoribose 1-diphosphate to orotate, leading to the formation of orotidine monophosphate (OMP). This Clostridium botulinum (strain Langeland / NCTC 10281 / Type F) protein is Orotate phosphoribosyltransferase.